The sequence spans 240 residues: Manganese transport system ATP-binding protein MntB (240 aa).

One can recognise an ABC transporter domain in the interval 1–233 (MEIQGLTIAY…KIQFAYGDAP (233 aa)). Residue 33 to 40 (GPNGAGKS) participates in ATP binding.

The protein belongs to the ABC transporter superfamily.

The protein localises to the cell membrane. Functionally, this protein is probably a component of a manganese permease, a binding protein-dependent, ATP-driven transport system. Probably responsible for energy coupling to the transport system. This Listeria monocytogenes serovar 1/2a (strain ATCC BAA-679 / EGD-e) protein is Manganese transport system ATP-binding protein MntB (mntB).